The primary structure comprises 29 residues: Cytochrome b6-f complex subunit 8 (29 aa).

The chain crosses the membrane as a helical span at residues 3 to 23 (IVSLAWAALMIVFTFSLSLVV).

It belongs to the PetN family. The 4 large subunits of the cytochrome b6-f complex are cytochrome b6, subunit IV (17 kDa polypeptide, PetD), cytochrome f and the Rieske protein, while the 4 small subunits are PetG, PetL, PetM and PetN. The complex functions as a dimer.

The protein resides in the plastid membrane. Component of the cytochrome b6-f complex, which mediates electron transfer between photosystem II (PSII) and photosystem I (PSI), cyclic electron flow around PSI, and state transitions. The chain is Cytochrome b6-f complex subunit 8 from Cuscuta exaltata (Tall dodder).